The sequence spans 553 residues: Salicylyl-CoA synthase / salicylate adenylyltransferase (553 aa).

Glycine 203 provides a ligand contact to ATP. 246–247 (HN) is a binding site for substrate. ATP is bound by residues glycine 320, valine 342, aspartate 426, arginine 441, and lysine 533. Residue lysine 533 participates in substrate binding.

The protein belongs to the ATP-dependent AMP-binding enzyme family.

It carries out the reaction salicylate + ATP + CoA = 2-hydroxybenzoyl-CoA + AMP + diphosphate. In terms of biological role, involved in the degradation of salicylate via a pathway involving coenzyme A derivative. Catalyzes the conversion of salicylate to salicyloyl-CoA via the formation of a salicylate-adenylate intermediate. The substrate specificity is strong, since benzoate, 3-hydroxybenzoate, 4-hydroxybenzoate, gentisate, 2-aminobenzoate, aminobenzoate, salicylamide, salicylaldoxime and 2-hydroxyphenyl acetate cannot substitute for salicylate. This is Salicylyl-CoA synthase / salicylate adenylyltransferase from Streptomyces sp.